Consider the following 105-residue polypeptide: Hydrogen cyanide synthase subunit HcnA (105 aa).

The region spanning 16–97 (ADMTISLNGQ…GMQVQTLSNR (82 aa)) is the 2Fe-2S ferredoxin-type domain. Positions 60, 65, 68, and 81 each coordinate [2Fe-2S] cluster.

Heterotrimer of HcnA, HcnB and HcnC.

The protein localises to the cell membrane. The enzyme catalyses glycine + 2 A = hydrogen cyanide + 2 AH2 + CO2. In terms of biological role, a three-component membrane-bound flavoenzyme that catalyzes the formation of hydrogen cyanide, a secondary metabolite, by transfer of electrons to a cyanide-resistant branch of the aerobic respiratory chain. Contributes to suppression of black root rot of tobacco. The polypeptide is Hydrogen cyanide synthase subunit HcnA (Pseudomonas protegens (strain DSM 19095 / LMG 27888 / CFBP 6595 / CHA0)).